Consider the following 350-residue polypeptide: Phenylalanine--tRNA ligase alpha subunit (350 aa).

Residue glutamate 259 coordinates Mg(2+).

This sequence belongs to the class-II aminoacyl-tRNA synthetase family. Phe-tRNA synthetase alpha subunit type 1 subfamily. In terms of assembly, tetramer of two alpha and two beta subunits. Requires Mg(2+) as cofactor.

It is found in the cytoplasm. The catalysed reaction is tRNA(Phe) + L-phenylalanine + ATP = L-phenylalanyl-tRNA(Phe) + AMP + diphosphate + H(+). The protein is Phenylalanine--tRNA ligase alpha subunit (pheS) of Rickettsia prowazekii (strain Madrid E).